A 122-amino-acid polypeptide reads, in one-letter code: Large ribosomal subunit protein uL14 (122 aa).

It belongs to the universal ribosomal protein uL14 family. As to quaternary structure, part of the 50S ribosomal subunit. Forms a cluster with proteins L3 and L19. In the 70S ribosome, L14 and L19 interact and together make contacts with the 16S rRNA in bridges B5 and B8.

Binds to 23S rRNA. Forms part of two intersubunit bridges in the 70S ribosome. The polypeptide is Large ribosomal subunit protein uL14 (Shewanella loihica (strain ATCC BAA-1088 / PV-4)).